Here is a 683-residue protein sequence, read N- to C-terminus: Phenoloxidase 3 (683 aa).

Positions 1–48 (MADKKNLLLLFDHPTEPVFMDKGGNGTVFDVPASYVTDRYNKMCKKVQ) are excised as a propeptide. N25 carries N-linked (GlcNAc...) asparagine glycosylation. Residues H209, H213, and H239 each contribute to the Cu cation site. E351 acts as the Proton acceptor in catalysis. Residue N358 is glycosylated (N-linked (GlcNAc...) asparagine). Positions 366, 370, and 406 each coordinate Cu cation. N492 and N514 each carry an N-linked (GlcNAc...) asparagine glycan. Cystine bridges form between C574/C617 and C576/C624.

It belongs to the tyrosinase family. Requires Cu(2+) as cofactor. Upon activation, a trypsin type protease cleaves prophenol oxidase to yield the active enzyme.

The protein resides in the secreted. The enzyme catalyses 2 L-dopa + O2 = 2 L-dopaquinone + 2 H2O. The catalysed reaction is L-tyrosine + O2 = L-dopaquinone + H2O. Functionally, this is a copper-containing oxidase that functions in the formation of pigments such as melanins and other polyphenolic compounds. Catalyzes the rate-limiting conversions of tyrosine to DOPA, DOPA to DOPA-quinone and possibly 5,6 dihydroxyindole to indole-5'6 quinone. This Drosophila erecta (Fruit fly) protein is Phenoloxidase 3 (PPO3).